The chain runs to 221 residues: Cytidylate kinase 1 (221 aa).

7–15 (GPSASGKSS) contributes to the ATP binding site.

It belongs to the cytidylate kinase family. Type 1 subfamily.

The protein resides in the cytoplasm. It carries out the reaction CMP + ATP = CDP + ADP. The catalysed reaction is dCMP + ATP = dCDP + ADP. The polypeptide is Cytidylate kinase 1 (Borreliella burgdorferi (strain ATCC 35210 / DSM 4680 / CIP 102532 / B31) (Borrelia burgdorferi)).